Consider the following 1274-residue polypeptide: ABC multidrug transporter E (1274 aa).

N-linked (GlcNAc...) asparagine glycosylation is present at Asn-48. In terms of domain architecture, ABC transmembrane type-1 1 spans 120 to 344 (FCFRVTGLRV…IASPLIIVSK (225 aa)). 4 helical membrane-spanning segments follow: residues 183–203 (LALLLAAFIIAFKYSWALTLV), 205–225 (SSALLFVVVGCSVTLPFMTKI), 280–300 (IFGIHFALVFFALYASFSLAF), and 321–341 (VFFSVMIVVSVLGNIASPLII). The ABC transporter 1 domain maps to 377-629 (IIFRDVRFTY…EGGVYRDLVN (253 aa)). Residue 412 to 419 (GPSGSGKS) coordinates ATP. N-linked (GlcNAc...) asparagine glycosylation is found at Asn-473 and Asn-580. Helical transmembrane passes span 697–717 (VAVLISTAGAGTAFPLQSWLF) and 737–757 (FWALMFFLLALAVGVLYSTVG). The ABC transmembrane type-1 2 domain maps to 697-984 (VAVLISTAGA…FFSFASNFAQ (288 aa)). Asn-792 carries an N-linked (GlcNAc...) asparagine glycan. A run of 3 helical transmembrane segments spans residues 818 to 838 (FPLISTFSMIGCIAIAFSFGW), 840 to 860 (LSLVTVFAALPCTFLAAFMRI), and 924 to 944 (LIFAFSDSVELCAMALTFWYG). The 247-residue stretch at 1023 to 1269 (VEFHDVSFRY…KGTYWQMVSS (247 aa)) folds into the ABC transporter 2 domain. The N-linked (GlcNAc...) asparagine glycan is linked to Asn-1044. An ATP-binding site is contributed by 1057–1064 (GPSGCGKT). Asn-1117 carries N-linked (GlcNAc...) asparagine glycosylation.

The protein belongs to the ABC transporter superfamily. ABCB family. Multidrug resistance exporter (TC 3.A.1.201) subfamily.

Its subcellular location is the cell membrane. In terms of biological role, pleiotropic ABC efflux transporter that may be involved in A.fumigatus adaptation to azoles such as vorizonazole. The polypeptide is ABC multidrug transporter E (Aspergillus fumigatus (strain ATCC MYA-4609 / CBS 101355 / FGSC A1100 / Af293) (Neosartorya fumigata)).